A 90-amino-acid polypeptide reads, in one-letter code: Small ribosomal subunit protein bS20 (90 aa).

The protein belongs to the bacterial ribosomal protein bS20 family.

In terms of biological role, binds directly to 16S ribosomal RNA. This Rickettsia akari (strain Hartford) protein is Small ribosomal subunit protein bS20.